A 90-amino-acid chain; its full sequence is Probable Fe(2+)-trafficking protein (90 aa).

Belongs to the Fe(2+)-trafficking protein family.

In terms of biological role, could be a mediator in iron transactions between iron acquisition and iron-requiring processes, such as synthesis and/or repair of Fe-S clusters in biosynthetic enzymes. In Polynucleobacter asymbioticus (strain DSM 18221 / CIP 109841 / QLW-P1DMWA-1) (Polynucleobacter necessarius subsp. asymbioticus), this protein is Probable Fe(2+)-trafficking protein.